The sequence spans 593 residues: DNA primase (593 aa).

Residues 38–62 (CPFHQEKTPSFTVSDSKRFFYCFGC) form a CHC2-type zinc finger. In terms of domain architecture, Toprim spans 250–332 (NRSILVEGYF…EKKISFIRLP (83 aa)). Residues Glu-256, Asp-300, and Asp-302 each coordinate Mg(2+).

The protein belongs to the DnaG primase family. Monomer. Interacts with DnaB. Requires Zn(2+) as cofactor. Mg(2+) is required as a cofactor.

It carries out the reaction ssDNA + n NTP = ssDNA/pppN(pN)n-1 hybrid + (n-1) diphosphate.. Functionally, RNA polymerase that catalyzes the synthesis of short RNA molecules used as primers for DNA polymerase during DNA replication. The chain is DNA primase from Rickettsia typhi (strain ATCC VR-144 / Wilmington).